A 329-amino-acid polypeptide reads, in one-letter code: 4-hydroxythreonine-4-phosphate dehydrogenase (329 aa).

2 residues coordinate substrate: His-136 and Thr-137. Residues His-166, His-211, and His-266 each contribute to the a divalent metal cation site. The substrate site is built by Lys-274, Asn-283, and Arg-292.

The protein belongs to the PdxA family. Homodimer. Zn(2+) serves as cofactor. Mg(2+) is required as a cofactor. The cofactor is Co(2+).

Its subcellular location is the cytoplasm. It carries out the reaction 4-(phosphooxy)-L-threonine + NAD(+) = 3-amino-2-oxopropyl phosphate + CO2 + NADH. It functions in the pathway cofactor biosynthesis; pyridoxine 5'-phosphate biosynthesis; pyridoxine 5'-phosphate from D-erythrose 4-phosphate: step 4/5. Catalyzes the NAD(P)-dependent oxidation of 4-(phosphooxy)-L-threonine (HTP) into 2-amino-3-oxo-4-(phosphooxy)butyric acid which spontaneously decarboxylates to form 3-amino-2-oxopropyl phosphate (AHAP). The polypeptide is 4-hydroxythreonine-4-phosphate dehydrogenase (Shigella boydii serotype 4 (strain Sb227)).